The chain runs to 336 residues: HTH-type transcriptional repressor PurR (336 aa).

Residues 2–56 enclose the HTH lacI-type domain; that stretch reads ATIKDVAKMAGVSTTTVSHVINKTRFVAKDTEEAVLSAIKQLNYSPSAVARSLKV. The H-T-H motif DNA-binding region spans 4 to 23; it reads IKDVAKMAGVSTTTVSHVIN. A DNA-binding region spans residues 48 to 56; sequence SAVARSLKV. Hypoxanthine-binding residues include tyrosine 73, lysine 188, threonine 190, phenylalanine 219, and aspartate 273.

Homodimer.

It participates in purine metabolism; purine nucleotide biosynthesis [regulation]. Is the main repressor of the genes involved in the de novo synthesis of purine nucleotides, regulating purB, purC, purEK, purF, purHD, purL, purMN and guaBA expression. PurR is allosterically activated to bind its cognate DNA by binding the purine corepressors, hypoxanthine or guanine, thereby effecting transcription repression. In Haemophilus influenzae (strain ATCC 51907 / DSM 11121 / KW20 / Rd), this protein is HTH-type transcriptional repressor PurR.